The following is a 385-amino-acid chain: Succinate--CoA ligase [ADP-forming] subunit beta (385 aa).

One can recognise an ATP-grasp domain in the interval 9–240 (KEIFAKYGIP…ETQLPQLEVE (232 aa)). Residues K46, 53 to 55 (GRG), E98, T101, and E106 each bind ATP. Mg(2+) is bound by residues N195 and D209. Substrate-binding positions include N260 and 317-319 (GIL).

The protein belongs to the succinate/malate CoA ligase beta subunit family. In terms of assembly, heterotetramer of two alpha and two beta subunits. Mg(2+) serves as cofactor.

The catalysed reaction is succinate + ATP + CoA = succinyl-CoA + ADP + phosphate. It carries out the reaction GTP + succinate + CoA = succinyl-CoA + GDP + phosphate. It functions in the pathway carbohydrate metabolism; tricarboxylic acid cycle; succinate from succinyl-CoA (ligase route): step 1/1. Functionally, succinyl-CoA synthetase functions in the citric acid cycle (TCA), coupling the hydrolysis of succinyl-CoA to the synthesis of either ATP or GTP and thus represents the only step of substrate-level phosphorylation in the TCA. The beta subunit provides nucleotide specificity of the enzyme and binds the substrate succinate, while the binding sites for coenzyme A and phosphate are found in the alpha subunit. This Aquifex aeolicus (strain VF5) protein is Succinate--CoA ligase [ADP-forming] subunit beta.